A 234-amino-acid polypeptide reads, in one-letter code: Dienlactone hydrolase 2 (234 aa).

Active-site residues include Cys-143, Asp-167, and His-199.

Belongs to the dienelactone hydrolase family.

It participates in xenobiotic degradation. In terms of biological role, dienlactone hydrolase; part of the Fusarium detoxification of benzoxazolinone cluster 2 (FDB2) involved in the degradation of benzoxazolinones produced by the host plant. Maize, wheat, and rye produce the 2 benzoxazinone phytoanticipins 2,4-dihy-droxy-7-methoxy-1,4-benzoxazin-3-one (DIMBOA) and 2,4-dihydroxy-1,4-benzoxazin-3-one (DIBOA) that, due to their inherent instability once released, spontaneously degrade to the more stable corresponding benzoxazolinones, 6-methoxy-2-benzoxazolinone (MBOA) and 2-benzoxazolinone (BOA), respectively. The first step in the detoxification of benzoxazolinones involves the hydrolysis of the cyclic ester bond of benzoxazolinones by the FDB1 cluster gamma-lactamase MBL1 to aminophenols. MBL1 is able to convert BOA into 2-aminophenol (2-AP), as well as MBOA into 5-methoxy-2-aminophenol (2-AMP). The FDB2 cluster N-malonyltransferase FDB2/NAT1 then metabolizes aminophenols via N-malonylation to non-toxic malonamic acids. FDB2/NAT1 converts 2-AP into N-(2-hydroxyphenyl) malonamic acid (HPMA) and 2-AMP into N-(2-hydroxy-4-methoxyphenyl) malonamic acid (HMPMA). The duplicated dienlactone hydrolases DLH1 and DLH2 may provide redundant function for hydrolyzing the lactone moiety in the BOA molecule. The roles of the amidases and other enzymes encoded by the 2 FDB clusters have not been identified so far. This is Dienlactone hydrolase 2 from Gibberella moniliformis (strain M3125 / FGSC 7600) (Maize ear and stalk rot fungus).